A 65-amino-acid polypeptide reads, in one-letter code: Defensin-B2 (65 aa).

Residues 1 to 23 (MEARVLLLCAVLFLLVHTPPAAG) form the signal peptide. Disulfide bonds link Cys-29-Cys-56, Cys-36-Cys-50, and Cys-40-Cys-57.

The protein belongs to the beta-defensin family. As to expression, lowly expressed in spleen, and lung.

It localises to the secreted. In terms of biological role, has antimicrobial activity. The protein is Defensin-B2 of Ornithorhynchus anatinus (Duckbill platypus).